Reading from the N-terminus, the 236-residue chain is Small ribosomal subunit protein uS2c (236 aa).

It belongs to the universal ribosomal protein uS2 family.

Its subcellular location is the plastid. The protein resides in the chloroplast. The sequence is that of Small ribosomal subunit protein uS2c (rps2) from Lepidium virginicum (Virginia pepperweed).